Consider the following 561-residue polypeptide: BTB/POZ domain-containing protein At2g46260 (561 aa).

Disordered stretches follow at residues 1 to 31 and 100 to 119; these read MRGS…EGDF and LTDN…NLDD. A compositionally biased stretch (polar residues) spans 17–28; that stretch reads DSNFSRHGSSSE. A compositionally biased stretch (acidic residues) spans 107–119; that stretch reads DMDDAPGGDNLDD. The BTB domain occupies 143 to 212; it reads IDCSTVVRVK…MYSNSLSVTT (70 aa). Residues 266–358 enclose the BACK domain; it reads QPLTDAAKQF…YMTCRKLKKV (93 aa).

It functions in the pathway protein modification; protein ubiquitination. Its function is as follows. May act as a substrate-specific adapter of an E3 ubiquitin-protein ligase complex (CUL3-RBX1-BTB) which mediates the ubiquitination and subsequent proteasomal degradation of target proteins. The polypeptide is BTB/POZ domain-containing protein At2g46260 (Arabidopsis thaliana (Mouse-ear cress)).